Here is a 955-residue protein sequence, read N- to C-terminus: B3 domain-containing protein Os07g0563300 (955 aa).

Pro residues-rich tracts occupy residues 1 to 20 (MSSP…PPPS) and 29 to 45 (VQPP…PQQP). Disordered regions lie at residues 1–81 (MSSP…QRPR) and 325–392 (ARKG…SSSL). Low complexity predominate over residues 62 to 71 (QHQQQQQGPP). Positions 332–342 (DPCSSVSTTFK) are enriched in polar residues. Over residues 343–355 (LDSHHPSILKDDP) the composition is skewed to basic and acidic residues. Residues 382–392 (QQQQQMASSSL) show a composition bias toward low complexity. A DNA-binding region (TF-B3) is located at residues 453–554 (FEKMLSASDA…KLVMGFRKAT (102 aa)). Composition is skewed to polar residues over residues 556-565 (LSAEQDQPTK) and 598-608 (NTESKSSSPVE). The tract at residues 556–642 (LSAEQDQPTK…PLPVKRKATS (87 aa)) is disordered. The segment at 708 to 758 (SGENHQWAQCEDCSKWRKLPVDALLPSKWTCSDNKWDSERSSCDSAQEINM) adopts a CW-type zinc-finger fold. Residues C717, C720, C738, and C750 each coordinate Zn(2+). Residues 856–955 (MMRREKRQQS…ATRLLRDNPT (100 aa)) are disordered. The segment covering 862 to 877 (RQQSEKDSGVPRKREP) has biased composition (basic and acidic residues). Composition is skewed to polar residues over residues 878–900 (GQSS…SSPH) and 920–933 (TSSP…LNSQ). Residues 939–955 (EQSPKSDATRLLRDNPT) show a composition bias toward basic and acidic residues.

The protein resides in the nucleus. The polypeptide is B3 domain-containing protein Os07g0563300 (Oryza sativa subsp. japonica (Rice)).